A 429-amino-acid polypeptide reads, in one-letter code: UPF0242 protein CT_616 (429 aa).

The protein belongs to the UPF0242 family.

This is UPF0242 protein CT_616 from Chlamydia trachomatis serovar D (strain ATCC VR-885 / DSM 19411 / UW-3/Cx).